Reading from the N-terminus, the 93-residue chain is Large ribosomal subunit protein eL29 (93 aa).

Residues 1-31 are compositionally biased toward basic residues; it reads MAKSKNHSTHHKNRKDHRNGIKKAVVHKKTS. The disordered stretch occupies residues 1–33; the sequence is MAKSKNHSTHHKNRKDHRNGIKKAVVHKKTSSK.

The protein belongs to the eukaryotic ribosomal protein eL29 family.

The protein is Large ribosomal subunit protein eL29 (rpl29) of Dictyostelium discoideum (Social amoeba).